We begin with the raw amino-acid sequence, 217 residues long: Uracil phosphoribosyltransferase (217 aa).

Residues Arg84, Arg109, and 137-145 (DPMLATGGS) contribute to the 5-phospho-alpha-D-ribose 1-diphosphate site. Uracil-binding positions include Ile202 and 207–209 (GDA). Asp208 serves as a coordination point for 5-phospho-alpha-D-ribose 1-diphosphate.

It belongs to the UPRTase family. Mg(2+) is required as a cofactor.

It carries out the reaction UMP + diphosphate = 5-phospho-alpha-D-ribose 1-diphosphate + uracil. It functions in the pathway pyrimidine metabolism; UMP biosynthesis via salvage pathway; UMP from uracil: step 1/1. With respect to regulation, allosterically activated by GTP. Catalyzes the conversion of uracil and 5-phospho-alpha-D-ribose 1-diphosphate (PRPP) to UMP and diphosphate. This chain is Uracil phosphoribosyltransferase, found in Synechococcus elongatus (strain ATCC 33912 / PCC 7942 / FACHB-805) (Anacystis nidulans R2).